The following is an 874-amino-acid chain: Alanine--tRNA ligase (874 aa).

Zn(2+) is bound by residues His562, His566, Cys664, and His668.

The protein belongs to the class-II aminoacyl-tRNA synthetase family. The cofactor is Zn(2+).

Its subcellular location is the cytoplasm. It carries out the reaction tRNA(Ala) + L-alanine + ATP = L-alanyl-tRNA(Ala) + AMP + diphosphate. In terms of biological role, catalyzes the attachment of alanine to tRNA(Ala) in a two-step reaction: alanine is first activated by ATP to form Ala-AMP and then transferred to the acceptor end of tRNA(Ala). Also edits incorrectly charged Ser-tRNA(Ala) and Gly-tRNA(Ala) via its editing domain. The sequence is that of Alanine--tRNA ligase from Shewanella woodyi (strain ATCC 51908 / MS32).